The following is a 130-amino-acid chain: Small ribosomal subunit protein uS8 (130 aa).

This sequence belongs to the universal ribosomal protein uS8 family. As to quaternary structure, part of the 30S ribosomal subunit.

Its function is as follows. One of the primary rRNA binding proteins, it binds directly to 16S rRNA central domain where it helps coordinate assembly of the platform of the 30S subunit. This chain is Small ribosomal subunit protein uS8, found in Methanothermococcus thermolithotrophicus (Methanococcus thermolithotrophicus).